The following is a 219-amino-acid chain: Auxin-responsive protein IAA24 (219 aa).

The EAR-like (transcriptional repression) motif lies at 24-28 (LCLRL). 2 disordered regions span residues 24 to 88 (LCLR…AKAQ) and 109 to 128 (AAAA…QQGG). A compositionally biased stretch (polar residues) spans 60-71 (STDSMASGTGTS). The PB1 domain maps to 129-215 (GLYVKVSMDG…SCKKLRIMKG (87 aa)).

This sequence belongs to the Aux/IAA family. As to quaternary structure, homodimers and heterodimers. Highly expressed in flowers. Expressed in seedlings.

It localises to the nucleus. Functionally, aux/IAA proteins are short-lived transcriptional factors that function as repressors of early auxin response genes at low auxin concentrations. The chain is Auxin-responsive protein IAA24 (IAA24) from Oryza sativa subsp. japonica (Rice).